We begin with the raw amino-acid sequence, 183 residues long: Ribosome rescue factor SmrB (183 aa).

Residues 98-173 (LDLHGLTQLQ…GDAALLVLIE (76 aa)) enclose the Smr domain.

Belongs to the SmrB family. As to quaternary structure, associates with collided ribosomes, but not with correctly translating polysomes.

Functionally, acts as a ribosome collision sensor. Detects stalled/collided disomes (pairs of ribosomes where the leading ribosome is stalled and a second ribosome has collided with it) and endonucleolytically cleaves mRNA at the 5' boundary of the stalled ribosome. Stalled/collided disomes form a new interface (primarily via the 30S subunits) that binds SmrB. Cleaved mRNA becomes available for tmRNA ligation, leading to ribosomal subunit dissociation and rescue of stalled ribosomes. This chain is Ribosome rescue factor SmrB, found in Escherichia coli O17:K52:H18 (strain UMN026 / ExPEC).